Here is a 360-residue protein sequence, read N- to C-terminus: Type II methyltransferase M2.ScrFI (360 aa).

In terms of domain architecture, SAM-dependent MTase C5-type spans 2-360 (LRVFEAFAGY…SLFKELFKSQ (359 aa)). Cysteine 127 is a catalytic residue.

It belongs to the class I-like SAM-binding methyltransferase superfamily. C5-methyltransferase family.

The enzyme catalyses a 2'-deoxycytidine in DNA + S-adenosyl-L-methionine = a 5-methyl-2'-deoxycytidine in DNA + S-adenosyl-L-homocysteine + H(+). A methylase, recognizes the double-stranded sequence 5'-CCNGG-3', methylates C-2 on both strands, and protects the DNA from cleavage by the ScrFI endonuclease. The polypeptide is Type II methyltransferase M2.ScrFI (scrFIBM) (Lactococcus lactis subsp. cremoris (Streptococcus cremoris)).